We begin with the raw amino-acid sequence, 280 residues long: RAD52 motif-containing protein 1 (280 aa).

The 84-residue stretch at 18–101 (KTIFIWDIQP…SPLKVRLSTK (84 aa)) folds into the RRM domain.

In terms of assembly, homodimer.

The protein resides in the nucleus. It localises to the cytoplasm. The protein localises to the nucleolus. Functionally, may confer resistance to the antitumor agent cisplatin. Binds to DNA and RNA. The protein is RAD52 motif-containing protein 1 (rdm1) of Danio rerio (Zebrafish).